A 387-amino-acid chain; its full sequence is Deoxyhypusine synthase (387 aa).

NAD(+) contacts are provided by residues 108 to 112, 134 to 136, Glu140, and Asp257; these read SNLIS and SAG. 139-140 lines the spermidine pocket; that stretch reads EE. Asp262 lines the spermidine pocket. Gly304 is an NAD(+) binding site. His309 contacts spermidine. Position 329–330 (329–330) interacts with NAD(+); it reads TG. Residues 335–337 and 344–350 each bind spermidine; these read GSD and EAVSWGK. Lys350 functions as the Nucleophile in the catalytic mechanism. NAD(+) is bound at residue 363–364; it reads DV.

This sequence belongs to the deoxyhypusine synthase family. Homotetramer. NAD(+) is required as a cofactor.

The catalysed reaction is [eIF5A protein]-L-lysine + spermidine = [eIF5A protein]-deoxyhypusine + propane-1,3-diamine. The protein operates within protein modification; eIF5A hypusination. Functionally, catalyzes the NAD-dependent oxidative cleavage of spermidine and the subsequent transfer of the butylamine moiety of spermidine to the epsilon-amino group of a specific lysine residue of the eIF-5A precursor protein to form the intermediate deoxyhypusine residue. This is Deoxyhypusine synthase from Saccharomyces cerevisiae (strain ATCC 204508 / S288c) (Baker's yeast).